Here is a 289-residue protein sequence, read N- to C-terminus: Acetyl-coenzyme A carboxylase carboxyl transferase subunit beta (289 aa).

The CoA carboxyltransferase N-terminal domain occupies 28–289 (VMTKCPKCKK…QGGEMAVWQS (262 aa)). Cys32, Cys35, Cys51, and Cys54 together coordinate Zn(2+). The segment at 32-54 (CPKCKKIMYTKEVLKNLKVCVNC) adopts a C4-type zinc-finger fold.

Belongs to the AccD/PCCB family. In terms of assembly, acetyl-CoA carboxylase is a heterohexamer composed of biotin carboxyl carrier protein (AccB), biotin carboxylase (AccC) and two subunits each of ACCase subunit alpha (AccA) and ACCase subunit beta (AccD). The cofactor is Zn(2+).

Its subcellular location is the cytoplasm. The enzyme catalyses N(6)-carboxybiotinyl-L-lysyl-[protein] + acetyl-CoA = N(6)-biotinyl-L-lysyl-[protein] + malonyl-CoA. It functions in the pathway lipid metabolism; malonyl-CoA biosynthesis; malonyl-CoA from acetyl-CoA: step 1/1. Functionally, component of the acetyl coenzyme A carboxylase (ACC) complex. Biotin carboxylase (BC) catalyzes the carboxylation of biotin on its carrier protein (BCCP) and then the CO(2) group is transferred by the transcarboxylase to acetyl-CoA to form malonyl-CoA. The polypeptide is Acetyl-coenzyme A carboxylase carboxyl transferase subunit beta (Bacillus anthracis (strain A0248)).